The following is a 575-amino-acid chain: Phosphoenolpyruvate-protein phosphotransferase (575 aa).

His189 functions as the Tele-phosphohistidine intermediate in the catalytic mechanism. Phosphoenolpyruvate-binding residues include Arg296 and Arg332. Positions 431 and 455 each coordinate Mg(2+). Residues 454-455 (ND) and Arg465 contribute to the phosphoenolpyruvate site. The active-site Proton donor is the Cys502.

Belongs to the PEP-utilizing enzyme family. In terms of assembly, homodimer. Mg(2+) is required as a cofactor.

Its subcellular location is the cytoplasm. The enzyme catalyses L-histidyl-[protein] + phosphoenolpyruvate = N(pros)-phospho-L-histidyl-[protein] + pyruvate. Functionally, general (non sugar-specific) component of the phosphoenolpyruvate-dependent sugar phosphotransferase system (sugar PTS). This major carbohydrate active-transport system catalyzes the phosphorylation of incoming sugar substrates concomitantly with their translocation across the cell membrane. Enzyme I transfers the phosphoryl group from phosphoenolpyruvate (PEP) to the phosphoryl carrier protein (HPr). The protein is Phosphoenolpyruvate-protein phosphotransferase (ptsI) of Salmonella typhimurium (strain LT2 / SGSC1412 / ATCC 700720).